The chain runs to 95 residues: Defensin alpha 4 (95 aa).

The signal sequence occupies residues 1–19; it reads MRTLALLAAILLVALQAQA. The propeptide occupies 20–62; it reads EHISVSIDEVVDQQPPQAEDQDVAIYVKEHESSALEALGVKAG. 3 disulfides stabilise this stretch: Cys65–Cys93, Cys67–Cys82, and Cys72–Cys92.

This sequence belongs to the alpha-defensin family.

The protein resides in the secreted. Its function is as follows. Host-defense peptide that has antimicrobial activity. Inhibits corticotropin (ACTH)-stimulated corticosterone production (in vitro). The chain is Defensin alpha 4 from Oryctolagus cuniculus (Rabbit).